The following is a 492-amino-acid chain: Cyclic di-GMP phosphodiesterase VC_1295 (492 aa).

6 consecutive transmembrane segments (helical) span residues 14 to 34 (IYHA…FALY), 49 to 69 (EIAT…HTLL), 80 to 100 (FIQL…LYYN), 111 to 131 (LKVL…LQLS), 160 to 180 (LIGL…MVAI), and 205 to 225 (EFAF…VLWS). The 53-residue stretch at 226 to 278 (RMMKEILDHQERSLQAVTQGNLQVRLPVYSNDELGNVAMLTNQMLDSLEATQN) folds into the HAMP domain. The HD-GYP domain maps to 280 to 490 (VKTTRDVAIV…FVAIAAHFKD (211 aa)).

Its subcellular location is the cell inner membrane. It catalyses the reaction 3',3'-c-di-GMP + 2 H2O = 2 GMP + 2 H(+). In terms of biological role, phosphodiesterase (PDE) that catalyzes the hydrolysis of cyclic diguanylate (c-di-GMP) to GMP in vitro. Increases motility and decreases biofilm formation in vivo. The sequence is that of Cyclic di-GMP phosphodiesterase VC_1295 from Vibrio cholerae serotype O1 (strain ATCC 39315 / El Tor Inaba N16961).